Reading from the N-terminus, the 1491-residue chain is Chromosome partition protein MukB (1491 aa).

ATP is bound at residue 34-41 (GGNGAGKS). 6 coiled-coil regions span residues 302-418 (LIEQ…QYQQ), 488-600 (EVAR…RFES), 638-666 (ELEK…RLAS), 781-806 (RAAR…AKAS), 836-1109 (EQAL…DLRT), and 1210-1239 (VEAI…ISSD). Positions 667–784 (PGGSNDPRLK…AIPLFGRAAR (118 aa)) are flexible hinge. The disordered stretch occupies residues 1059–1080 (QRRRDELQERLHTSRSRKSEYE).

Belongs to the SMC family. MukB subfamily. Homodimerization via its hinge domain. Binds to DNA via its C-terminal region. Interacts, and probably forms a ternary complex, with MukE and MukF via its C-terminal region. The complex formation is stimulated by calcium or magnesium. Interacts with tubulin-related protein FtsZ.

The protein resides in the cytoplasm. It is found in the nucleoid. Plays a central role in chromosome condensation, segregation and cell cycle progression. Functions as a homodimer, which is essential for chromosome partition. Involved in negative DNA supercoiling in vivo, and by this means organize and compact chromosomes. May achieve or facilitate chromosome segregation by condensation DNA from both sides of a centrally located replisome during cell division. The chain is Chromosome partition protein MukB from Vibrio cholerae serotype O1 (strain ATCC 39541 / Classical Ogawa 395 / O395).